The sequence spans 568 residues: Circadian clock protein KaiC2 (568 aa).

2 KaiC domains span residues 11–250 (IKCP…SVSQ) and 251–485 (ERIS…LTGT). S423 and S424 each carry phosphoserine; by autocatalysis.

Belongs to the KaiC family. As to quaternary structure, multimerizes, probably forming homohexamers, no interaction with KaiC1 or KaiC3 is seen.

The enzyme catalyses L-seryl-[protein] + ATP = O-phospho-L-seryl-[protein] + ADP + H(+). It carries out the reaction L-threonyl-[protein] + ATP = O-phospho-L-threonyl-[protein] + ADP + H(+). It catalyses the reaction ATP + H2O = ADP + phosphate + H(+). Its function is as follows. Autophosphorylates independently of KaiA. The polypeptide is Circadian clock protein KaiC2 (Synechocystis sp. (strain ATCC 27184 / PCC 6803 / Kazusa)).